The following is a 354-amino-acid chain: Probable butyrate kinase 2 (354 aa).

It belongs to the acetokinase family.

It localises to the cytoplasm. It carries out the reaction butanoate + ATP = butanoyl phosphate + ADP. The protein is Probable butyrate kinase 2 of Caldanaerobacter subterraneus subsp. tengcongensis (strain DSM 15242 / JCM 11007 / NBRC 100824 / MB4) (Thermoanaerobacter tengcongensis).